We begin with the raw amino-acid sequence, 374 residues long: Severin (374 aa).

Gelsolin-like repeat units lie at residues 58-109 (FTLE…DEYG), 180-220 (EGKT…KCSA), and 278-369 (EVIK…SFLK).

The protein belongs to the villin/gelsolin family.

In terms of biological role, severin blocks the ends of F-actin and causes the fragmentation and depolymerization of actin filaments. This severin binds stably with actin both in a Ca(2+) dependent and a Ca(2+) independent manner. This chain is Severin (AG8), found in Echinococcus granulosus (Hydatid tapeworm).